The following is a 192-amino-acid chain: Imidazoleglycerol-phosphate dehydratase (192 aa).

Belongs to the imidazoleglycerol-phosphate dehydratase family.

The protein localises to the cytoplasm. It catalyses the reaction D-erythro-1-(imidazol-4-yl)glycerol 3-phosphate = 3-(imidazol-4-yl)-2-oxopropyl phosphate + H2O. It participates in amino-acid biosynthesis; L-histidine biosynthesis; L-histidine from 5-phospho-alpha-D-ribose 1-diphosphate: step 6/9. In Methanocella arvoryzae (strain DSM 22066 / NBRC 105507 / MRE50), this protein is Imidazoleglycerol-phosphate dehydratase.